A 302-amino-acid polypeptide reads, in one-letter code: MKDKIRLELEGIDIRFDEPLKEYTYTKVGGAVDYLAFPRNRYEIVRIVEFAKREGIPWQVLGNSSNIIVRDGGIRGFVIRMDKLNSVTVSGYTIEAEAGANLIETTKVALFHSLSGFEFACGIPGSIGGAVYMNAGAYGGEVAHILVSAQILTPAGYVETLDNRELRFGYRSSILQENGAIVLSAKFALRPGNHTVIQQEMARLTHLRELKQPLEYPSCGSVFKRPLGHFAGQLIMDAGLKGYRIGGVEVSEKHAGFMVNIENGTASDYENLIAHVIQVVEKSSGITLEREVRIIGDPADTL.

Positions 27-192 constitute an FAD-binding PCMH-type domain; it reads KVGGAVDYLA…LSAKFALRPG (166 aa). Arg171 is a catalytic residue. Catalysis depends on Ser221, which acts as the Proton donor. The active site involves Glu291.

The protein belongs to the MurB family. FAD serves as cofactor.

It is found in the cytoplasm. It catalyses the reaction UDP-N-acetyl-alpha-D-muramate + NADP(+) = UDP-N-acetyl-3-O-(1-carboxyvinyl)-alpha-D-glucosamine + NADPH + H(+). It functions in the pathway cell wall biogenesis; peptidoglycan biosynthesis. Its function is as follows. Cell wall formation. The chain is UDP-N-acetylenolpyruvoylglucosamine reductase from Streptococcus suis (strain 98HAH33).